The following is a 691-amino-acid chain: Elongation factor G (691 aa).

Positions 8–282 (EQTRNIGIMA…AVIDYLPAPT (275 aa)) constitute a tr-type G domain. GTP contacts are provided by residues 17-24 (AHIDAGKT), 81-85 (DTPGH), and 135-138 (NKMD).

This sequence belongs to the TRAFAC class translation factor GTPase superfamily. Classic translation factor GTPase family. EF-G/EF-2 subfamily.

Its subcellular location is the cytoplasm. In terms of biological role, catalyzes the GTP-dependent ribosomal translocation step during translation elongation. During this step, the ribosome changes from the pre-translocational (PRE) to the post-translocational (POST) state as the newly formed A-site-bound peptidyl-tRNA and P-site-bound deacylated tRNA move to the P and E sites, respectively. Catalyzes the coordinated movement of the two tRNA molecules, the mRNA and conformational changes in the ribosome. This is Elongation factor G from Natranaerobius thermophilus (strain ATCC BAA-1301 / DSM 18059 / JW/NM-WN-LF).